Consider the following 457-residue polypeptide: Sensor protein CpxA (457 aa).

Over 1 to 7 (MIGSLTA) the chain is Cytoplasmic. The chain crosses the membrane as a helical span at residues 8–29 (RIFAIFWLTLALVLMLVLMLPK). The Periplasmic segment spans residues 30-163 (LDSRQMTELL…SDFINLLFDR (134 aa)). Residues 164 to 184 (PLLLLIVTMLVSTPLLLWLAW) traverse the membrane as a helical segment. One can recognise an HAMP domain in the interval 185 to 237 (SLAKPARKLKNAADEVAQGNLRQHPELEAGPQEFLAAGASFNQMVTALERMMT). The Cytoplasmic portion of the chain corresponds to 185 to 457 (SLAKPARKLK…VIWLPLYKRS (273 aa)). The Histidine kinase domain maps to 245 to 455 (DISHELRTPL…RLVIWLPLYK (211 aa)). Position 248 is a phosphohistidine; by autocatalysis (H248).

The protein localises to the cell inner membrane. It catalyses the reaction ATP + protein L-histidine = ADP + protein N-phospho-L-histidine.. Its function is as follows. This protein is involved in several diverse cellular processes, such as the functioning of acetohydroxyacid synthetase I, in the biosynthesis of isoleucine and valine, the TraJ protein activation activity for tra gene expression in F plasmid, and the synthesis, translocation, or stability of cell envelope proteins. Activates CpxR by phosphorylation. The sequence is that of Sensor protein CpxA (cpxA) from Escherichia coli O157:H7.